A 293-amino-acid chain; its full sequence is Shikimate dehydrogenase (NADP(+)) (293 aa).

Shikimate is bound by residues 26–28 and T73; that span reads SKS. The Proton acceptor role is filled by K77. An NADP(+)-binding site is contributed by E89. Residues N98 and D113 each contribute to the shikimate site. NADP(+)-binding positions include 137 to 141, 161 to 166, and I231; these read GAGGA and NRTRQR. Position 233 (Y233) interacts with shikimate. G254 serves as a coordination point for NADP(+).

This sequence belongs to the shikimate dehydrogenase family. Homodimer.

It catalyses the reaction shikimate + NADP(+) = 3-dehydroshikimate + NADPH + H(+). It participates in metabolic intermediate biosynthesis; chorismate biosynthesis; chorismate from D-erythrose 4-phosphate and phosphoenolpyruvate: step 4/7. In terms of biological role, involved in the biosynthesis of the chorismate, which leads to the biosynthesis of aromatic amino acids. Catalyzes the reversible NADPH linked reduction of 3-dehydroshikimate (DHSA) to yield shikimate (SA). The chain is Shikimate dehydrogenase (NADP(+)) from Bartonella quintana (strain Toulouse) (Rochalimaea quintana).